A 103-amino-acid chain; its full sequence is Cell division protein FtsB (103 aa).

At 1–3 (MGK) the chain is on the cytoplasmic side. The chain crosses the membrane as a helical span at residues 4-21 (LTLLLLAILVWLQYSLWF). Topologically, residues 22–103 (GKNGIHDYTR…RAQSAGQNNR (82 aa)) are periplasmic. The stretch at 31–71 (RVNDDVAAQQATNAKLKARNDQLFAEIDDLNGGQEALEERA) forms a coiled coil.

The protein belongs to the FtsB family. As to quaternary structure, part of a complex composed of FtsB, FtsL and FtsQ.

It localises to the cell inner membrane. Functionally, essential cell division protein. May link together the upstream cell division proteins, which are predominantly cytoplasmic, with the downstream cell division proteins, which are predominantly periplasmic. The protein is Cell division protein FtsB of Shigella boydii serotype 18 (strain CDC 3083-94 / BS512).